The primary structure comprises 226 residues: Large ribosomal subunit protein uL1 (226 aa).

The protein belongs to the universal ribosomal protein uL1 family. In terms of assembly, part of the 50S ribosomal subunit.

Its function is as follows. Binds directly to 23S rRNA. The L1 stalk is quite mobile in the ribosome, and is involved in E site tRNA release. In terms of biological role, protein L1 is also a translational repressor protein, it controls the translation of the L11 operon by binding to its mRNA. The protein is Large ribosomal subunit protein uL1 of Mycoplasmoides gallisepticum (strain R(low / passage 15 / clone 2)) (Mycoplasma gallisepticum).